We begin with the raw amino-acid sequence, 539 residues long: Chaperonin GroEL (539 aa).

Residues 30-33 (TLGP), 87-91 (DGTTT), glycine 414, 479-481 (DAL), and aspartate 495 each bind ATP.

This sequence belongs to the chaperonin (HSP60) family. As to quaternary structure, forms a cylinder of 14 subunits composed of two heptameric rings stacked back-to-back. Interacts with the co-chaperonin GroES.

The protein resides in the cytoplasm. The catalysed reaction is ATP + H2O + a folded polypeptide = ADP + phosphate + an unfolded polypeptide.. In terms of biological role, together with its co-chaperonin GroES, plays an essential role in assisting protein folding. The GroEL-GroES system forms a nano-cage that allows encapsulation of the non-native substrate proteins and provides a physical environment optimized to promote and accelerate protein folding. This chain is Chaperonin GroEL, found in Caldicellulosiruptor bescii (strain ATCC BAA-1888 / DSM 6725 / KCTC 15123 / Z-1320) (Anaerocellum thermophilum).